Here is a 208-residue protein sequence, read N- to C-terminus: MRAPQMGSLGFLDKGHIPLVLQLLFLILFTGLLVAIIIQVSKMPSSEEIQWEHTKQEKMYKDLSQLKSEVDRLCRLCPWDWTFFNGNCYFFSKSQRDWHDSMTACKEMGAQLVIIKSHEEQSFLQQTSKKNSYTWMGLSDLNKEGEWYWLDGSPLSDSFEKYWKKGQPNNVGGQDCVEFRDNGWNDAKCEQRKFWICKKIATTCLSKW.

Residues 1–16 lie on the Cytoplasmic side of the membrane; that stretch reads MRAPQMGSLGFLDKGH. A helical; Signal-anchor for type II membrane protein transmembrane segment spans residues 17–37; sequence IPLVLQLLFLILFTGLLVAII. Residues 38–208 are Extracellular-facing; it reads IQVSKMPSSE…KIATTCLSKW (171 aa). 3 disulfide bridges follow: cysteine 77/cysteine 88, cysteine 105/cysteine 197, and cysteine 176/cysteine 189. The 116-residue stretch at 83 to 198 folds into the C-type lectin domain; that stretch reads FFNGNCYFFS…CEQRKFWICK (116 aa).

The protein localises to the membrane. Putative pathogen-recognition receptor. May mediate the endocytosis of pathogens which are subsequently degraded in lysosomal compartments. The chain is CD209 antigen-like protein E (Cd209e) from Mus musculus (Mouse).